The chain runs to 721 residues: Glucans biosynthesis glucosyltransferase H (721 aa).

6 consecutive transmembrane segments (helical) span residues 53–75 (VLIM…QVLQ), 85–107 (VVLV…ALAG), 404–426 (GIGA…LISL), 456–478 (WVFA…LVLI), 490–512 (LRTF…VMMV), and 567–589 (WPLL…VALL).

It belongs to the glycosyltransferase 2 family. OpgH subfamily.

Its subcellular location is the cell inner membrane. It participates in glycan metabolism; osmoregulated periplasmic glucan (OPG) biosynthesis. Involved in the biosynthesis of osmoregulated periplasmic glucans (OPGs). The sequence is that of Glucans biosynthesis glucosyltransferase H from Rhodopseudomonas palustris (strain ATCC BAA-98 / CGA009).